The following is a 380-amino-acid chain: Glucose-1-phosphate adenylyltransferase (380 aa).

Alpha-D-glucose 1-phosphate is bound by residues Gly-164, 179-180 (EK), and Ser-190.

It belongs to the bacterial/plant glucose-1-phosphate adenylyltransferase family. Homotetramer.

It catalyses the reaction alpha-D-glucose 1-phosphate + ATP + H(+) = ADP-alpha-D-glucose + diphosphate. It participates in glycan biosynthesis; glycogen biosynthesis. Its function is as follows. Involved in the biosynthesis of ADP-glucose, a building block required for the elongation reactions to produce glycogen. Catalyzes the reaction between ATP and alpha-D-glucose 1-phosphate (G1P) to produce pyrophosphate and ADP-Glc. This chain is Glucose-1-phosphate adenylyltransferase, found in Streptococcus pneumoniae (strain CGSP14).